The following is a 105-amino-acid chain: Nucleoid-associated protein RPE_4812 (105 aa).

Belongs to the YbaB/EbfC family. As to quaternary structure, homodimer.

The protein resides in the cytoplasm. The protein localises to the nucleoid. In terms of biological role, binds to DNA and alters its conformation. May be involved in regulation of gene expression, nucleoid organization and DNA protection. The sequence is that of Nucleoid-associated protein RPE_4812 from Rhodopseudomonas palustris (strain BisA53).